Reading from the N-terminus, the 439-residue chain is Tol-Pal system protein TolB (439 aa).

An N-terminal signal peptide occupies residues methionine 1–alanine 22.

It belongs to the TolB family. In terms of assembly, the Tol-Pal system is composed of five core proteins: the inner membrane proteins TolA, TolQ and TolR, the periplasmic protein TolB and the outer membrane protein Pal. They form a network linking the inner and outer membranes and the peptidoglycan layer.

Its subcellular location is the periplasm. Its function is as follows. Part of the Tol-Pal system, which plays a role in outer membrane invagination during cell division and is important for maintaining outer membrane integrity. The protein is Tol-Pal system protein TolB of Xanthomonas oryzae pv. oryzae (strain KACC10331 / KXO85).